Reading from the N-terminus, the 87-residue chain is Small ribosomal subunit protein uS17 (87 aa).

The protein belongs to the universal ribosomal protein uS17 family. As to quaternary structure, part of the 30S ribosomal subunit.

In terms of biological role, one of the primary rRNA binding proteins, it binds specifically to the 5'-end of 16S ribosomal RNA. The sequence is that of Small ribosomal subunit protein uS17 from Heliobacterium modesticaldum (strain ATCC 51547 / Ice1).